A 380-amino-acid chain; its full sequence is Carbamoyl phosphate synthase small chain (380 aa).

The interval 1–184 is CPSase; it reads MTTSTRGAHR…EAYVVPAIGE (184 aa). 3 residues coordinate L-glutamine: Ser-55, Gly-236, and Gly-238. One can recognise a Glutamine amidotransferase type-1 domain in the interval 188-380; that stretch reads TVAAVDLGIK…FVNLMEGQRA (193 aa). The active-site Nucleophile is Cys-264. L-glutamine is bound by residues Phe-265, Gln-268, Asn-306, Gly-308, and Phe-309. Residues His-354 and Glu-356 contribute to the active site.

The protein belongs to the CarA family. As to quaternary structure, composed of two chains; the small (or glutamine) chain promotes the hydrolysis of glutamine to ammonia, which is used by the large (or ammonia) chain to synthesize carbamoyl phosphate. Tetramer of heterodimers (alpha,beta)4.

The enzyme catalyses hydrogencarbonate + L-glutamine + 2 ATP + H2O = carbamoyl phosphate + L-glutamate + 2 ADP + phosphate + 2 H(+). The catalysed reaction is L-glutamine + H2O = L-glutamate + NH4(+). The protein operates within amino-acid biosynthesis; L-arginine biosynthesis; carbamoyl phosphate from bicarbonate: step 1/1. It functions in the pathway pyrimidine metabolism; UMP biosynthesis via de novo pathway; (S)-dihydroorotate from bicarbonate: step 1/3. Its function is as follows. Small subunit of the glutamine-dependent carbamoyl phosphate synthetase (CPSase). CPSase catalyzes the formation of carbamoyl phosphate from the ammonia moiety of glutamine, carbonate, and phosphate donated by ATP, constituting the first step of 2 biosynthetic pathways, one leading to arginine and/or urea and the other to pyrimidine nucleotides. The small subunit (glutamine amidotransferase) binds and cleaves glutamine to supply the large subunit with the substrate ammonia. This Streptomyces coelicolor (strain ATCC BAA-471 / A3(2) / M145) protein is Carbamoyl phosphate synthase small chain.